The primary structure comprises 73 residues: uncharacterized protein (73 aa).

It belongs to the asfivirus I73R family.

It is found in the virion. This is an uncharacterized protein from Ornithodoros (relapsing fever ticks).